Here is a 285-residue protein sequence, read N- to C-terminus: Sulfotransferase 2A1 (285 aa).

3'-phosphoadenylyl sulfate is bound by residues Lys44, Ser45, Gly46, Thr47, Asn48, and Trp49. Residue His99 is the Proton acceptor of the active site. Residues Arg121, Ser129, Tyr184, Ser218, Met223, Arg247, Lys248, and Gly249 each coordinate 3'-phosphoadenylyl sulfate. Ser251 bears the Phosphoserine mark.

It belongs to the sulfotransferase 1 family. In terms of assembly, homodimer. The N-terminus is blocked. As to expression, liver, adrenal and at lower level in the kidney. Is present in human fetus in higher level in the adrenal than the liver and the kidney.

It is found in the cytoplasm. The catalysed reaction is an alcohol + 3'-phosphoadenylyl sulfate = an alkyl sulfate + adenosine 3',5'-bisphosphate + H(+). It carries out the reaction (24S)-hydroxycholesterol + 3'-phosphoadenylyl sulfate = (24S)-hydroxycholesterol 24-sulfate + adenosine 3',5'-bisphosphate + H(+). The enzyme catalyses (24S)-hydroxycholesterol + 3'-phosphoadenylyl sulfate = (24S)-hydroxycholesterol 3-sulfate + adenosine 3',5'-bisphosphate + H(+). It catalyses the reaction (24S)-hydroxycholesterol 24-sulfate + 3'-phosphoadenylyl sulfate = (24S)-hydroxycholesterol 3,24-disulfate + adenosine 3',5'-bisphosphate + H(+). The catalysed reaction is 3beta-hydroxyandrost-5-en-17-one + 3'-phosphoadenylyl sulfate = dehydroepiandrosterone 3-sulfate + adenosine 3',5'-bisphosphate + H(+). It carries out the reaction pregnenolone + 3'-phosphoadenylyl sulfate = pregnenolone sulfate + adenosine 3',5'-bisphosphate + H(+). The enzyme catalyses androsterone + 3'-phosphoadenylyl sulfate = androsterone 3alpha-sulfate + adenosine 3',5'-bisphosphate + H(+). It catalyses the reaction taurolithocholate + 3'-phosphoadenylyl sulfate = taurolithocholate 3-sulfate + adenosine 3',5'-bisphosphate + H(+). The catalysed reaction is lithocholate + 3'-phosphoadenylyl sulfate = lithocholate sulfate + adenosine 3',5'-bisphosphate + H(+). Subject to substrate inhibition. Alternate orientations for binding of steroid substrates to SULT2A1 may play a role in substrate inhibition. Sulfotransferase that utilizes 3'-phospho-5'-adenylyl sulfate (PAPS) as sulfonate donor to catalyze the sulfonation of steroids and bile acids in the liver and adrenal glands. Mediates the sulfation of a wide range of steroids and sterols, including pregnenolone, androsterone, DHEA, bile acids, cholesterol and as well many xenobiotics that contain alcohol and phenol functional groups. Sulfonation increases the water solubility of most compounds, and therefore their renal excretion, but it can also result in bioactivation to form active metabolites. Plays an important role in maintening steroid and lipid homeostasis. Plays a key role in bile acid metabolism. In addition, catalyzes the metabolic activation of potent carcinogenic polycyclic arylmethanols. The protein is Sulfotransferase 2A1 (SULT2A1) of Homo sapiens (Human).